A 130-amino-acid chain; its full sequence is Protein YoeA (130 aa).

The first 28 residues, 1–28 (MLYNIPCRIYILSTLSLCISGIVSTATA), serve as a signal peptide directing secretion. A TBDR plug domain is found at 51–130 (NLWESPATIQ…RCRRYSRGER (80 aa)).

This sequence belongs to the TonB-dependent receptor family.

The sequence is that of Protein YoeA (yoeA) from Escherichia coli (strain K12).